Here is a 114-residue protein sequence, read N- to C-terminus: Putative movement protein (114 aa).

Residues 27-47 (LIGIILLVTVCLIVLWVCIML) form a helical membrane-spanning segment. The interval 79–114 (RTPFEATGPERERNWDARRQSTTVNPASQPNTGSVF) is disordered. Over residues 86–97 (GPERERNWDARR) the composition is skewed to basic and acidic residues. A compositionally biased stretch (polar residues) spans 98 to 114 (QSTTVNPASQPNTGSVF).

This sequence belongs to the nanovirus movement protein family.

The protein localises to the host cell membrane. May transport viral genome to neighboring plant cells directly through plasmosdesmata, without any budding. The movement protein allows efficient cell to cell propagation, by bypassing the host cell wall barrier. The sequence is that of Putative movement protein (DNA-M) from Faba bean necrotic yellows virus (isolate Syrian SV292-88) (FBNYV).